Reading from the N-terminus, the 124-residue chain is Large ribosomal subunit protein bL12 (124 aa).

The tract at residues 99-124 (KEGMNKEDAEKAKADLEAAGAKVELK) is disordered. Residues 101–114 (GMNKEDAEKAKADL) show a composition bias toward basic and acidic residues. Low complexity predominate over residues 115–124 (EAAGAKVELK).

Belongs to the bacterial ribosomal protein bL12 family. As to quaternary structure, homodimer. Part of the ribosomal stalk of the 50S ribosomal subunit. Forms a multimeric L10(L12)X complex, where L10 forms an elongated spine to which 2 to 4 L12 dimers bind in a sequential fashion. Binds GTP-bound translation factors.

Its function is as follows. Forms part of the ribosomal stalk which helps the ribosome interact with GTP-bound translation factors. Is thus essential for accurate translation. The polypeptide is Large ribosomal subunit protein bL12 (Campylobacter hominis (strain ATCC BAA-381 / DSM 21671 / CCUG 45161 / LMG 19568 / NCTC 13146 / CH001A)).